The following is a 379-amino-acid chain: Spermidine/putrescine import ATP-binding protein PotA (379 aa).

Positions 10-240 (VTIDQVSKAY…PATDFVAKFI (231 aa)) constitute an ABC transporter domain. An ATP-binding site is contributed by 42–49 (GPSGCGKT).

The protein belongs to the ABC transporter superfamily. Spermidine/putrescine importer (TC 3.A.1.11.1) family. In terms of assembly, the complex is composed of two ATP-binding proteins (PotA), two transmembrane proteins (PotB and PotC) and a solute-binding protein (PotD).

Its subcellular location is the cell inner membrane. It carries out the reaction ATP + H2O + polyamine-[polyamine-binding protein]Side 1 = ADP + phosphate + polyamineSide 2 + [polyamine-binding protein]Side 1.. Functionally, part of the ABC transporter complex PotABCD involved in spermidine/putrescine import. Responsible for energy coupling to the transport system. The sequence is that of Spermidine/putrescine import ATP-binding protein PotA from Treponema pallidum (strain Nichols).